Consider the following 400-residue polypeptide: Tyrosine--tRNA ligase (400 aa).

A 'HIGH' region motif is present at residues Pro-45–His-54. The 'KMSKS' region motif lies at Lys-230–Ser-234. Lys-233 is an ATP binding site. One can recognise an S4 RNA-binding domain in the interval Glu-339 to Ile-399.

It belongs to the class-I aminoacyl-tRNA synthetase family. TyrS type 2 subfamily. Homodimer.

It localises to the cytoplasm. It catalyses the reaction tRNA(Tyr) + L-tyrosine + ATP = L-tyrosyl-tRNA(Tyr) + AMP + diphosphate + H(+). Functionally, catalyzes the attachment of tyrosine to tRNA(Tyr) in a two-step reaction: tyrosine is first activated by ATP to form Tyr-AMP and then transferred to the acceptor end of tRNA(Tyr). This chain is Tyrosine--tRNA ligase, found in Helicobacter hepaticus (strain ATCC 51449 / 3B1).